The primary structure comprises 308 residues: Glutaminase (308 aa).

The substrate site is built by Ser-66, Asn-117, Glu-161, Asn-168, Tyr-192, Tyr-244, and Val-262.

Belongs to the glutaminase family. Homotetramer.

The enzyme catalyses L-glutamine + H2O = L-glutamate + NH4(+). The chain is Glutaminase from Proteus mirabilis (strain HI4320).